The chain runs to 493 residues: Mitochondrial distribution and morphology protein 10 (493 aa).

It belongs to the MDM10 family. As to quaternary structure, component of the ER-mitochondria encounter structure (ERMES) or MDM complex, composed of MMM1, MDM10, MDM12 and MDM34. Associates with the mitochondrial outer membrane sorting assembly machinery SAM(core) complex, which consists of SAM35, SAM37 and SAM50, to form a SAM(holo) complex.

The protein resides in the mitochondrion outer membrane. In terms of biological role, component of the ERMES/MDM complex, which serves as a molecular tether to connect the endoplasmic reticulum and mitochondria. Components of this complex are involved in the control of mitochondrial shape and protein biogenesis and may function in phospholipid exchange. MDM10 is involved in the late assembly steps of the general translocase of the mitochondrial outer membrane (TOM complex). Functions in the TOM40-specific route of the assembly of outer membrane beta-barrel proteins, including the association of TOM40 with the receptor TOM22 and small TOM proteins. Can associate with the SAM(core) complex as well as the MDM12-MMM1 complex, both involved in late steps of the major beta-barrel assembly pathway, that is responsible for biogenesis of all outer membrane beta-barrel proteins. May act as a switch that shuttles between both complexes and channels precursor proteins into the TOM40-specific pathway. Plays a role in mitochondrial morphology and in the inheritance of mitochondria. This is Mitochondrial distribution and morphology protein 10 from Saccharomyces cerevisiae (strain YJM789) (Baker's yeast).